The sequence spans 217 residues: Thiamine-phosphate synthase (217 aa).

4-amino-2-methyl-5-(diphosphooxymethyl)pyrimidine contacts are provided by residues 45–49 and N81; that span reads QFRQK. Mg(2+)-binding residues include D82 and D101. S120 lines the 4-amino-2-methyl-5-(diphosphooxymethyl)pyrimidine pocket. Residue 147–149 participates in 2-[(2R,5Z)-2-carboxy-4-methylthiazol-5(2H)-ylidene]ethyl phosphate binding; the sequence is TPS. K150 serves as a coordination point for 4-amino-2-methyl-5-(diphosphooxymethyl)pyrimidine. Residues G179 and 197-198 each bind 2-[(2R,5Z)-2-carboxy-4-methylthiazol-5(2H)-ylidene]ethyl phosphate; that span reads IS.

It belongs to the thiamine-phosphate synthase family. Mg(2+) serves as cofactor.

It carries out the reaction 2-[(2R,5Z)-2-carboxy-4-methylthiazol-5(2H)-ylidene]ethyl phosphate + 4-amino-2-methyl-5-(diphosphooxymethyl)pyrimidine + 2 H(+) = thiamine phosphate + CO2 + diphosphate. It catalyses the reaction 2-(2-carboxy-4-methylthiazol-5-yl)ethyl phosphate + 4-amino-2-methyl-5-(diphosphooxymethyl)pyrimidine + 2 H(+) = thiamine phosphate + CO2 + diphosphate. The enzyme catalyses 4-methyl-5-(2-phosphooxyethyl)-thiazole + 4-amino-2-methyl-5-(diphosphooxymethyl)pyrimidine + H(+) = thiamine phosphate + diphosphate. It functions in the pathway cofactor biosynthesis; thiamine diphosphate biosynthesis; thiamine phosphate from 4-amino-2-methyl-5-diphosphomethylpyrimidine and 4-methyl-5-(2-phosphoethyl)-thiazole: step 1/1. Functionally, condenses 4-methyl-5-(beta-hydroxyethyl)thiazole monophosphate (THZ-P) and 2-methyl-4-amino-5-hydroxymethyl pyrimidine pyrophosphate (HMP-PP) to form thiamine monophosphate (TMP). This is Thiamine-phosphate synthase from Helicobacter pylori (strain J99 / ATCC 700824) (Campylobacter pylori J99).